The chain runs to 243 residues: 1-(5-phosphoribosyl)-5-[(5-phosphoribosylamino)methylideneamino] imidazole-4-carboxamide isomerase (243 aa).

The active-site Proton acceptor is aspartate 8. Aspartate 130 functions as the Proton donor in the catalytic mechanism.

Belongs to the HisA/HisF family.

It localises to the cytoplasm. The enzyme catalyses 1-(5-phospho-beta-D-ribosyl)-5-[(5-phospho-beta-D-ribosylamino)methylideneamino]imidazole-4-carboxamide = 5-[(5-phospho-1-deoxy-D-ribulos-1-ylimino)methylamino]-1-(5-phospho-beta-D-ribosyl)imidazole-4-carboxamide. It functions in the pathway amino-acid biosynthesis; L-histidine biosynthesis; L-histidine from 5-phospho-alpha-D-ribose 1-diphosphate: step 4/9. The sequence is that of 1-(5-phosphoribosyl)-5-[(5-phosphoribosylamino)methylideneamino] imidazole-4-carboxamide isomerase from Methylococcus capsulatus (strain ATCC 33009 / NCIMB 11132 / Bath).